The chain runs to 61 residues: MARYRRRSRSRSRSRYRRRRRRRSRGRRRRTYRRSRRHSRRRRGRRRGYSRRRYSRRGRRR.

The disordered stretch occupies residues 1 to 61 (MARYRRRSRS…RRYSRRGRRR (61 aa)).

Belongs to the protamine P1 family. In terms of tissue distribution, testis.

The protein localises to the nucleus. Its subcellular location is the chromosome. Its function is as follows. Protamines substitute for histones in the chromatin of sperm during the haploid phase of spermatogenesis. They compact sperm DNA into a highly condensed, stable and inactive complex. This Dasyurus hallucatus (Northern quoll) protein is Sperm protamine P1 (PRM1).